A 1382-amino-acid chain; its full sequence is Eukaryotic translation initiation factor 3 subunit A (1382 aa).

Residue Lys68 is modified to N6-acetyllysine. A coiled-coil region spans residues 82-120 (NIKSLEDVVRAYLKMAEEKTEAAKEESQQMVLDIEDLDN). The region spanning 315 to 498 (MQRMSTRVLL…RTLSFGSDLN (184 aa)) is the PCI domain. Residues Ser492 and Ser584 each carry the phosphoserine modification. Residues 664–835 (LDPDFIMAKQ…REERERAERA (172 aa)) form an interaction with EIF3B region. Disordered stretches follow at residues 810–844 (KEEEEQRRAEEQMLKEREERERAERAKREEELREY) and 866–1382 (EERE…TVRR). Composition is skewed to basic and acidic residues over residues 866-1165 (EERE…DDSR), 1177-1328 (GWRE…DPPR), and 1336-1371 (SRDRERDRDREREGEKEKASWRAEKDRESLRRTKNE). Ser881, Ser882, and Ser895 each carry phosphoserine. Repeat 1 spans residues 925–934 (DEDRSHRRDE). The interval 925-1172 (DEDRSHRRDE…DSRPGPWRPL (248 aa)) is 25 X 10 AA approximate tandem repeats of [DE]-[DE]-[DE]-R-[SEVGFPILV]-[HPSN]-[RSW]-[RL]-[DRGTIHN]-[EPMANLGDT]. The 2; truncated repeat unit spans residues 935 to 942 (ERPRRLGD). 20 consecutive repeat copies span residues 943-952 (DEDREPSLRP), 953-962 (DDDRVPRRGM), 963-972 (DDDRGPRRGP), 973-982 (EEDRFSRRGA), 983-992 (DDDRPSWRNT), 993-1002 (DDDRPPRRIA), 1003-1012 (DEDRGNWRHA), 1013-1022 (DDDRPPRRGL), 1023-1032 (DEDRGSWRTA), 1033-1042 (DEDRGPRRGM), 1043-1052 (DDDRGPRRGG), 1054-1063 (DDERSSWRNA), 1064-1073 (DDDRGPRRGL), 1074-1083 (DDDRGPRRGM), 1084-1093 (DDDRGPRRGM), 1094-1103 (DDDRGPRRGM), 1104-1113 (DDDRGPRRGL), 1114-1123 (DDDRGPWRNA), 1124-1133 (DDDRIPRRGA), and 1134-1143 (EDDRGPWRNM). Ser949 is subject to Phosphoserine. Residue Ser1028 is modified to Phosphoserine. The stretch at 1144 to 1152 (DDDRLSRRA) is one 23; truncated repeat. Residues 1153-1162 (DDDRFPRRGD) form repeat 24. The 25; approximate repeat unit spans residues 1163-1172 (DSRPGPWRPL). 5 positions are modified to phosphoserine: Ser1188, Ser1198, Ser1262, Ser1336, and Ser1364.

As to quaternary structure, interacts with EIF4G1. Component of the eukaryotic translation initiation factor 3 (eIF-3) complex, which is composed of 13 subunits: EIF3A, EIF3B, EIF3C, EIF3D, EIF3E, EIF3F, EIF3G, EIF3H, EIF3I, EIF3J, EIF3K, EIF3L and EIF3M. The eIF-3 complex appears to include 3 stable modules: module A is composed of EIF3A, EIF3B, EIF3G and EIF3I; module B is composed of EIF3F, EIF3H, and EIF3M; and module C is composed of EIF3C, EIF3D, EIF3E, EIF3L and EIF3K. EIF3C of module C binds EIF3B of module A and EIF3H of module B, thereby linking the three modules. EIF3J is a labile subunit that binds to the eIF-3 complex via EIF3B. The eIF-3 complex interacts with RPS6KB1 under conditions of nutrient depletion. Mitogenic stimulation leads to binding and activation of a complex composed of MTOR and RPTOR, leading to phosphorylation and release of RPS6KB1 and binding of EIF4B to eIF-3. Also interacts with KRT7 and PIWIL2. In terms of processing, phosphorylated. Phosphorylation is enhanced upon serum stimulation.

It is found in the cytoplasm. Functionally, RNA-binding component of the eukaryotic translation initiation factor 3 (eIF-3) complex, which is required for several steps in the initiation of protein synthesis. The eIF-3 complex associates with the 40S ribosome and facilitates the recruitment of eIF-1, eIF-1A, eIF-2:GTP:methionyl-tRNAi and eIF-5 to form the 43S pre-initiation complex (43S PIC). The eIF-3 complex stimulates mRNA recruitment to the 43S PIC and scanning of the mRNA for AUG recognition. The eIF-3 complex is also required for disassembly and recycling of post-termination ribosomal complexes and subsequently prevents premature joining of the 40S and 60S ribosomal subunits prior to initiation. The eIF-3 complex specifically targets and initiates translation of a subset of mRNAs involved in cell proliferation, including cell cycling, differentiation and apoptosis, and uses different modes of RNA stem-loop binding to exert either translational activation or repression. Its function is as follows. (Microbial infection) Essential for the initiation of translation on type-1 viral ribosomal entry sites (IRESs), like for HCV, PV, EV71 or BEV translation. (Microbial infection) In case of FCV infection, plays a role in the ribosomal termination-reinitiation event leading to the translation of VP2. This Homo sapiens (Human) protein is Eukaryotic translation initiation factor 3 subunit A.